Here is a 659-residue protein sequence, read N- to C-terminus: UvrABC system protein B (659 aa).

In terms of domain architecture, Helicase ATP-binding spans Glu27 to Ile414. Gly40 to Thr47 serves as a coordination point for ATP. Positions Tyr93–Ser116 match the Beta-hairpin motif. The 163-residue stretch at Gln432 to Ile594 folds into the Helicase C-terminal domain. The region spanning Glu624 to Asn659 is the UVR domain.

Belongs to the UvrB family. In terms of assembly, forms a heterotetramer with UvrA during the search for lesions. Interacts with UvrC in an incision complex.

It is found in the cytoplasm. In terms of biological role, the UvrABC repair system catalyzes the recognition and processing of DNA lesions. A damage recognition complex composed of 2 UvrA and 2 UvrB subunits scans DNA for abnormalities. Upon binding of the UvrA(2)B(2) complex to a putative damaged site, the DNA wraps around one UvrB monomer. DNA wrap is dependent on ATP binding by UvrB and probably causes local melting of the DNA helix, facilitating insertion of UvrB beta-hairpin between the DNA strands. Then UvrB probes one DNA strand for the presence of a lesion. If a lesion is found the UvrA subunits dissociate and the UvrB-DNA preincision complex is formed. This complex is subsequently bound by UvrC and the second UvrB is released. If no lesion is found, the DNA wraps around the other UvrB subunit that will check the other stand for damage. The polypeptide is UvrABC system protein B (Mycoplasma mobile (strain ATCC 43663 / 163K / NCTC 11711) (Mesomycoplasma mobile)).